The following is a 738-amino-acid chain: 130 kDa Glycoprotein O (738 aa).

The signal sequence occupies residues 1-23 (MLHISRLGLFLALFAIVMHSVNL). N-linked (GlcNAc...) asparagine; by host glycans are attached at residues N41, N64, N114, N175, N190, N201, and N221. The span at 240-263 (TPSSTPSSTSASITSPHIPSTNTP) shows a compositional bias: low complexity. The tract at residues 240-272 (TPSSTPSSTSASITSPHIPSTNTPTPEPSPVTK) is disordered. N273 and N326 each carry an N-linked (GlcNAc...) asparagine; by host glycan. Polar residues predominate over residues 330-342 (KTEQNTENPTENP). The interval 330 to 351 (KTEQNTENPTENPKSPPKPTNF) is disordered. N-linked (GlcNAc...) asparagine; by host glycosylation is found at N353, N370, N445, N477, N483, N529, N547, N573, N629, N646, and N689. Residues 541-554 (NALPSSNSSHSITK) show a composition bias toward polar residues. The segment at 541-568 (NALPSSNSSHSITKVTEEPKQNRMSAST) is disordered. The tract at residues 667–712 (PQTITERSTDVKKKSSTESREANKTLPGNDYRVTDKNSHNHPDNLT) is disordered. 2 stretches are compositionally biased toward basic and acidic residues: residues 673 to 689 (RSTDVKKKSSTESREAN) and 698 to 708 (RVTDKNSHNHP). N-linked (GlcNAc...) asparagine; by host glycans are attached at residues N710, N720, and N733.

The protein belongs to the herpesviridae U47 family. As to quaternary structure, part of a gH-gL-gO complex. Post-translationally, 120 kDa Glycoprotein O: A shorter mature protein, gO-80K, is produced probably by proteolytic cleavage. In terms of processing, 120 kDa Glycoprotein O: Modified with high mannose-oligosaccharides. N-glycosylated with complex glycans.

The protein resides in the virion. The protein localises to the host cell membrane. The chain is 130 kDa Glycoprotein O (U47) from Human herpesvirus 6B (strain Z29) (HHV-6 variant B).